Consider the following 331-residue polypeptide: Adenosine deaminase (331 aa).

Zn(2+) contacts are provided by H12 and H14. Substrate contacts are provided by H14, D16, and G170. Residue H197 participates in Zn(2+) binding. E200 functions as the Proton donor in the catalytic mechanism. Position 278 (D278) interacts with Zn(2+). D279 is a binding site for substrate.

The protein belongs to the metallo-dependent hydrolases superfamily. Adenosine and AMP deaminases family. Adenosine deaminase subfamily. Requires Zn(2+) as cofactor.

The catalysed reaction is adenosine + H2O + H(+) = inosine + NH4(+). It carries out the reaction 2'-deoxyadenosine + H2O + H(+) = 2'-deoxyinosine + NH4(+). Its function is as follows. Catalyzes the hydrolytic deamination of adenosine and 2-deoxyadenosine. The sequence is that of Adenosine deaminase from Shewanella sp. (strain W3-18-1).